A 54-amino-acid chain; its full sequence is Small ribosomal subunit protein uS14 (54 aa).

Residues cysteine 19, cysteine 22, cysteine 37, and cysteine 40 each coordinate Zn(2+).

Belongs to the universal ribosomal protein uS14 family. Zinc-binding uS14 subfamily. In terms of assembly, part of the 30S ribosomal subunit. Requires Zn(2+) as cofactor.

Binds 16S rRNA, required for the assembly of 30S particles. In Aeropyrum pernix (strain ATCC 700893 / DSM 11879 / JCM 9820 / NBRC 100138 / K1), this protein is Small ribosomal subunit protein uS14.